Here is a 55-residue protein sequence, read N- to C-terminus: Trypsin inhibitor ClTI-1 (55 aa).

The Kazal-like domain occupies 1 to 55; it reads SIPPACDKYSRLPGCPRDYSPVCGTDGKTYPNECVLCLSNSEENKNVQIYKSGMC. 3 disulfide bridges follow: Cys6–Cys37, Cys15–Cys34, and Cys23–Cys55.

It is found in the secreted. Inhibits trypsin and plasmin. This Gallus gallus (Chicken) protein is Trypsin inhibitor ClTI-1.